Reading from the N-terminus, the 505-residue chain is Glycerol kinase (505 aa).

T13 is a binding site for ADP. Positions 13, 14, and 15 each coordinate ATP. T13 contributes to the sn-glycerol 3-phosphate binding site. R17 provides a ligand contact to ADP. The sn-glycerol 3-phosphate site is built by R83, E84, Y135, and D247. R83, E84, Y135, D247, and Q248 together coordinate glycerol. Positions 269 and 313 each coordinate ADP. ATP is bound by residues T269, G313, Q317, and G414. ADP contacts are provided by G414 and N418.

Belongs to the FGGY kinase family.

It catalyses the reaction glycerol + ATP = sn-glycerol 3-phosphate + ADP + H(+). It functions in the pathway polyol metabolism; glycerol degradation via glycerol kinase pathway; sn-glycerol 3-phosphate from glycerol: step 1/1. Inhibited by fructose 1,6-bisphosphate (FBP). Functionally, key enzyme in the regulation of glycerol uptake and metabolism. Catalyzes the phosphorylation of glycerol to yield sn-glycerol 3-phosphate. The protein is Glycerol kinase of Clavibacter michiganensis subsp. michiganensis (strain NCPPB 382).